The primary structure comprises 360 residues: Protein Wnt-2 (360 aa).

A signal peptide spans 1–25 (MNAPVGGIWLWLPLLLTWLSPEVSS). 11 cysteine pairs are disulfide-bonded: Cys-76–Cys-87, Cys-127–Cys-135, Cys-137–Cys-157, Cys-206–Cys-220, Cys-208–Cys-215, Cys-278–Cys-309, Cys-294–Cys-304, Cys-308–Cys-348, Cys-324–Cys-339, Cys-326–Cys-336, and Cys-331–Cys-332. Residue Ser-212 is the site of O-palmitoleoyl serine; by PORCN attachment. N-linked (GlcNAc...) asparagine glycosylation occurs at Asn-295.

Belongs to the Wnt family. Palmitoleoylation is required for efficient binding to frizzled receptors. Depalmitoleoylation leads to Wnt signaling pathway inhibition.

The protein localises to the secreted. It localises to the extracellular space. The protein resides in the extracellular matrix. Its function is as follows. Ligand for members of the frizzled family of seven transmembrane receptors. Probable developmental protein. May be a signaling molecule which affects the development of discrete regions of tissues. Is likely to signal over only few cell diameters. The polypeptide is Protein Wnt-2 (WNT2) (Rhinolophus ferrumequinum (Greater horseshoe bat)).